A 712-amino-acid polypeptide reads, in one-letter code: Polyribonucleotide nucleotidyltransferase (712 aa).

Mg(2+) contacts are provided by D487 and D493. The KH domain maps to 554–613; the sequence is PKILTMQINPEKIREVIGPSGKQINKIIDETGVKIDIEQDGTIFISSVNEAMNQKAKQII. An S1 motif domain is found at 623 to 691; sequence GQIYLGKVKR…KQGRVNLSRK (69 aa).

Belongs to the polyribonucleotide nucleotidyltransferase family. It depends on Mg(2+) as a cofactor.

It is found in the cytoplasm. It catalyses the reaction RNA(n+1) + phosphate = RNA(n) + a ribonucleoside 5'-diphosphate. Involved in mRNA degradation. Catalyzes the phosphorolysis of single-stranded polyribonucleotides processively in the 3'- to 5'-direction. In Geobacillus sp. (strain WCH70), this protein is Polyribonucleotide nucleotidyltransferase.